The following is a 206-amino-acid chain: Orotate phosphoribosyltransferase (206 aa).

5-phospho-alpha-D-ribose 1-diphosphate contacts are provided by residues R114, K115, K118, H120, and 141-149 (EDVVTTGQS). Residues T145 and R173 each coordinate orotate.

The protein belongs to the purine/pyrimidine phosphoribosyltransferase family. PyrE subfamily. Homodimer. It depends on Mg(2+) as a cofactor.

The catalysed reaction is orotidine 5'-phosphate + diphosphate = orotate + 5-phospho-alpha-D-ribose 1-diphosphate. It participates in pyrimidine metabolism; UMP biosynthesis via de novo pathway; UMP from orotate: step 1/2. In terms of biological role, catalyzes the transfer of a ribosyl phosphate group from 5-phosphoribose 1-diphosphate to orotate, leading to the formation of orotidine monophosphate (OMP). This chain is Orotate phosphoribosyltransferase, found in Nostoc sp. (strain PCC 7120 / SAG 25.82 / UTEX 2576).